Consider the following 214-residue polypeptide: C-type lectin domain family 4 member E (214 aa).

Over 1-22 the chain is Cytoplasmic; it reads MNSTKSPASHHTERGCFKNSQV. Residues 23-45 form a helical; Signal-anchor for type II membrane protein membrane-spanning segment; it reads LSWTIAGASILFLSGCFITRCVV. At 46 to 214 the chain is on the extracellular side; the sequence is TYRSSQISGQ…CEMPEISPLD (169 aa). Cys-80 and Cys-91 form a disulfide bridge. A C-type lectin domain is found at 87-206; it reads YQSSCYFFST…CFYSMPWICE (120 aa). Asn-107 carries N-linked (GlcNAc...) asparagine glycosylation. 2 cysteine pairs are disulfide-bonded: Cys-108-Cys-205 and Cys-179-Cys-197. Positions 117, 123, 169, 171, 193, 194, and 206 each coordinate Ca(2+). Residues 169–171 carry the Confers specificity for glucose/mannose-type carbohydrates motif; the sequence is EPN.

As to quaternary structure, monomer and homodimer. Interacts with signaling adapter Fc receptor gamma chain/FCER1G to form a functional complex; the interaction is direct. Alternatively, acts as a bridge for interaction between CLEC4D and FCER1G. A heterodimer of CLEC4E and CLEC4D associates with FCER1G to form a functional complex. Interacts with SAP130 nuclear protein that is released from necrotic cells; the interaction is direct. As to expression, highly expressed in macrophages in response to stimulation with bacterial glycolipids and pro-inflammatory cytokines. Expressed in dendritic cells (at protein level) in response to stimulation with mycobacterial trehalose 6,6'-dimycolate (TDM).

It localises to the cell membrane. The protein resides in the cell projection. It is found in the phagocytic cup. Calcium-dependent lectin that acts as a pattern recognition receptor (PRR) of the innate immune system: recognizes damage-associated molecular patterns (DAMPs) of abnormal self and pathogen-associated molecular patterns (PAMPs) of bacteria and fungi. The PAMPs notably include mycobacterial trehalose 6,6'-dimycolate (TDM), a cell wall glycolipid with potent adjuvant immunomodulatory functions. Interacts with signaling adapter Fc receptor gamma chain/FCER1G to form a functional complex in myeloid cells. Binding of mycobacterial trehalose 6,6'-dimycolate (TDM) to this receptor complex leads to phosphorylation of the immunoreceptor tyrosine-based activation motif (ITAM) of FCER1G, triggering activation of SYK, CARD9 and NF-kappa-B, consequently driving maturation of antigen-presenting cells and shaping antigen-specific priming of T-cells toward effector T-helper 1 (Th1) and T-helper 17 (Th17) cell subtypes. Also recognizes alpha-mannose residues on pathogenic fungi of the genus Malassezia and mediates macrophage activation. Through recognition of DAMPs released upon nonhomeostatic cell death, enables immune sensing of damaged self and promotes inflammatory cell infiltration into the damaged tissue. In Mus musculus (Mouse), this protein is C-type lectin domain family 4 member E.